We begin with the raw amino-acid sequence, 335 residues long: Methionine aminopeptidase 1D, mitochondrial (335 aa).

The transit peptide at 1–19 (MAAPSGVHLLVRRGSHRIF) directs the protein to the mitochondrion. A substrate-binding site is contributed by His161. Positions 178, 189, and 252 each coordinate a divalent metal cation. Position 259 (His259) interacts with substrate. A divalent metal cation is bound by residues Glu284 and Glu315.

Belongs to the peptidase M24A family. Methionine aminopeptidase type 1 subfamily. Co(2+) is required as a cofactor. Requires Zn(2+) as cofactor. The cofactor is Mn(2+). Fe(2+) serves as cofactor. Overexpressed in colon cancer cell lines and colon tumors as compared to normal tissues (at protein level).

Its subcellular location is the mitochondrion. It catalyses the reaction Release of N-terminal amino acids, preferentially methionine, from peptides and arylamides.. Its function is as follows. Removes the N-terminal methionine from nascent proteins. The N-terminal methionine is often cleaved when the second residue in the primary sequence is small and uncharged (Met-Ala-, Cys, Gly, Pro, Ser, Thr, or Val). Requires deformylation of the N(alpha)-formylated initiator methionine before it can be hydrolyzed. May play a role in colon tumorigenesis. The sequence is that of Methionine aminopeptidase 1D, mitochondrial (METAP1D) from Homo sapiens (Human).